A 37-amino-acid polypeptide reads, in one-letter code: Large ribosomal subunit protein bL36 (37 aa).

Belongs to the bacterial ribosomal protein bL36 family.

This is Large ribosomal subunit protein bL36 from Laribacter hongkongensis (strain HLHK9).